The sequence spans 175 residues: Probable DNA replication complex GINS protein PSF2 (175 aa).

Belongs to the GINS2/PSF2 family. In terms of assembly, component of the GINS complex which is a heterotetramer of SLD5, PSF1, PSF2 and PSF3.

The protein localises to the nucleus. The GINS complex plays an essential role in the initiation of DNA replication. The chain is Probable DNA replication complex GINS protein PSF2 from Encephalitozoon cuniculi (strain GB-M1) (Microsporidian parasite).